A 211-amino-acid polypeptide reads, in one-letter code: Thiamine-phosphate synthase (211 aa).

4-amino-2-methyl-5-(diphosphooxymethyl)pyrimidine-binding positions include 37–41 (QLREK) and Asn-69. 2 residues coordinate Mg(2+): Asp-70 and Glu-89. Residue Ser-108 coordinates 4-amino-2-methyl-5-(diphosphooxymethyl)pyrimidine. Position 134 to 136 (134 to 136 (TTT)) interacts with 2-[(2R,5Z)-2-carboxy-4-methylthiazol-5(2H)-ylidene]ethyl phosphate. A 4-amino-2-methyl-5-(diphosphooxymethyl)pyrimidine-binding site is contributed by Lys-137. Residues Gly-163 and 183–184 (VS) each bind 2-[(2R,5Z)-2-carboxy-4-methylthiazol-5(2H)-ylidene]ethyl phosphate.

It belongs to the thiamine-phosphate synthase family. Mg(2+) is required as a cofactor.

The enzyme catalyses 2-[(2R,5Z)-2-carboxy-4-methylthiazol-5(2H)-ylidene]ethyl phosphate + 4-amino-2-methyl-5-(diphosphooxymethyl)pyrimidine + 2 H(+) = thiamine phosphate + CO2 + diphosphate. The catalysed reaction is 2-(2-carboxy-4-methylthiazol-5-yl)ethyl phosphate + 4-amino-2-methyl-5-(diphosphooxymethyl)pyrimidine + 2 H(+) = thiamine phosphate + CO2 + diphosphate. It catalyses the reaction 4-methyl-5-(2-phosphooxyethyl)-thiazole + 4-amino-2-methyl-5-(diphosphooxymethyl)pyrimidine + H(+) = thiamine phosphate + diphosphate. Its pathway is cofactor biosynthesis; thiamine diphosphate biosynthesis; thiamine phosphate from 4-amino-2-methyl-5-diphosphomethylpyrimidine and 4-methyl-5-(2-phosphoethyl)-thiazole: step 1/1. Functionally, condenses 4-methyl-5-(beta-hydroxyethyl)thiazole monophosphate (THZ-P) and 2-methyl-4-amino-5-hydroxymethyl pyrimidine pyrophosphate (HMP-PP) to form thiamine monophosphate (TMP). The chain is Thiamine-phosphate synthase from Enterococcus faecalis (strain ATCC 700802 / V583).